Reading from the N-terminus, the 406-residue chain is Peptide antibiotic transporter SbmA (406 aa).

At 1–11 the chain is on the periplasmic side; it reads MFKSFFPKPGT. The chain crosses the membrane as a helical span at residues 12–32; the sequence is FFLSAFVWALIAVIFWQAGGG. Topologically, residues 33-56 are cytoplasmic; that stretch reads DWVARITGASGQIPISAARFWSLD. A helical membrane pass occupies residues 57–77; that stretch reads FLIFYAYYIVCVGLFALFWFI. At 78-87 the chain is on the periplasmic side; that stretch reads YSPHRWQYWS. A helical membrane pass occupies residues 88–108; the sequence is ILGTALIIFVTWFLVEVGVAV. Topologically, residues 109–137 are cytoplasmic; the sequence is NAWYAPFYDLIQTALSSPHKVTIEQFYRE. Residues 138 to 158 form a helical membrane-spanning segment; the sequence is VGVFLGIALIAVVISVLNNFF. Residues 159–205 are Periplasmic-facing; sequence VSHYVFRWRTAMNEYYMANWQQLRHIEGAAQRVQEDTMRFASTLENM. A helical membrane pass occupies residues 206 to 226; sequence GVSFINAIMTLIAFLPVLVTL. The Cytoplasmic segment spans residues 227-242; it reads SAHVPELPIIGHIPYG. The helical transmembrane segment at 243–263 threads the bilayer; sequence LVIAAIVWSLMGTGLLAVVGI. The Periplasmic segment spans residues 264 to 331; it reads KLPGLEFKNQ…ARILYLQVDN (68 aa). The chain crosses the membrane as a helical span at residues 332-352; the sequence is VFGLFLLFPSIVAGTITLGLM. Residues 353-406 lie on the Cytoplasmic side of the membrane; that stretch reads TQITNVFGQVRGAFQYLINSWTTLVELMSIYKRLRSFEHELDGDKIQEVTHTLS.

This sequence belongs to the peptide uptake permease (PUP) (TC 9.A.18) family.

Its subcellular location is the cell inner membrane. Uptake of antimicrobial peptides. This chain is Peptide antibiotic transporter SbmA (sbmA), found in Escherichia coli O157:H7.